A 607-amino-acid chain; its full sequence is Elongation factor 4 (607 aa).

A tr-type G domain is found at Ser11–Thr193. GTP contacts are provided by residues Asp23 to Thr28 and Asn140 to Asp143.

It belongs to the TRAFAC class translation factor GTPase superfamily. Classic translation factor GTPase family. LepA subfamily.

It localises to the cell membrane. The enzyme catalyses GTP + H2O = GDP + phosphate + H(+). In terms of biological role, required for accurate and efficient protein synthesis under certain stress conditions. May act as a fidelity factor of the translation reaction, by catalyzing a one-codon backward translocation of tRNAs on improperly translocated ribosomes. Back-translocation proceeds from a post-translocation (POST) complex to a pre-translocation (PRE) complex, thus giving elongation factor G a second chance to translocate the tRNAs correctly. Binds to ribosomes in a GTP-dependent manner. This is Elongation factor 4 from Bacillus anthracis (strain CDC 684 / NRRL 3495).